Here is a 129-residue protein sequence, read N- to C-terminus: Ribosome-binding factor A (129 aa).

It belongs to the RbfA family. As to quaternary structure, monomer. Binds 30S ribosomal subunits, but not 50S ribosomal subunits or 70S ribosomes.

The protein localises to the cytoplasm. In terms of biological role, one of several proteins that assist in the late maturation steps of the functional core of the 30S ribosomal subunit. Associates with free 30S ribosomal subunits (but not with 30S subunits that are part of 70S ribosomes or polysomes). Required for efficient processing of 16S rRNA. May interact with the 5'-terminal helix region of 16S rRNA. The protein is Ribosome-binding factor A of Gloeobacter violaceus (strain ATCC 29082 / PCC 7421).